Here is a 191-residue protein sequence, read N- to C-terminus: Peptide methionine sulfoxide reductase (191 aa).

2 disordered regions span residues M1–N20 and E168–G191.

The protein belongs to the MsrA Met sulfoxide reductase family.

The catalysed reaction is L-methionyl-[protein] + [thioredoxin]-disulfide + H2O = L-methionyl-(S)-S-oxide-[protein] + [thioredoxin]-dithiol. It carries out the reaction [thioredoxin]-disulfide + L-methionine + H2O = L-methionine (S)-S-oxide + [thioredoxin]-dithiol. Its function is as follows. Has an important function as a repair enzyme for proteins that have been inactivated by oxidation. Catalyzes the reversible oxidation-reduction of methionine sulfoxide in proteins to methionine. The sequence is that of Peptide methionine sulfoxide reductase from Fragaria ananassa (Strawberry).